A 150-amino-acid chain; its full sequence is Small ribosomal subunit protein eS19 (150 aa).

It belongs to the eukaryotic ribosomal protein eS19 family. In terms of assembly, part of the 30S ribosomal subunit.

In terms of biological role, may be involved in maturation of the 30S ribosomal subunit. The polypeptide is Small ribosomal subunit protein eS19 (Thermococcus kodakarensis (strain ATCC BAA-918 / JCM 12380 / KOD1) (Pyrococcus kodakaraensis (strain KOD1))).